The primary structure comprises 142 residues: Prefoldin subunit alpha 2 (142 aa).

It belongs to the prefoldin subunit alpha family. In terms of assembly, heterohexamer of two alpha and four beta subunits.

The protein resides in the cytoplasm. In terms of biological role, molecular chaperone capable of stabilizing a range of proteins. Seems to fulfill an ATP-independent, HSP70-like function in archaeal de novo protein folding. The chain is Prefoldin subunit alpha 2 from Thermococcus kodakarensis (strain ATCC BAA-918 / JCM 12380 / KOD1) (Pyrococcus kodakaraensis (strain KOD1)).